A 280-amino-acid chain; its full sequence is Protein HEAT-INDUCED TAS1 TARGET 4 (280 aa).

This sequence belongs to the heat induced plant HTT protein family. Expressed in seedlings, leaves, stems, inflorescences and siliques.

The protein resides in the cytoplasm. It is found in the nucleus. Its function is as follows. Mediates both basal and acquired thermotolerance. This is Protein HEAT-INDUCED TAS1 TARGET 4 from Arabidopsis thaliana (Mouse-ear cress).